A 438-amino-acid polypeptide reads, in one-letter code: Methylenetetrahydrofolate--tRNA-(uracil-5-)-methyltransferase TrmFO (438 aa).

10-15 serves as a coordination point for FAD; sequence GGGLAG.

This sequence belongs to the MnmG family. TrmFO subfamily. It depends on FAD as a cofactor.

The protein localises to the cytoplasm. The catalysed reaction is uridine(54) in tRNA + (6R)-5,10-methylene-5,6,7,8-tetrahydrofolate + NADH + H(+) = 5-methyluridine(54) in tRNA + (6S)-5,6,7,8-tetrahydrofolate + NAD(+). The enzyme catalyses uridine(54) in tRNA + (6R)-5,10-methylene-5,6,7,8-tetrahydrofolate + NADPH + H(+) = 5-methyluridine(54) in tRNA + (6S)-5,6,7,8-tetrahydrofolate + NADP(+). In terms of biological role, catalyzes the folate-dependent formation of 5-methyl-uridine at position 54 (M-5-U54) in all tRNAs. The sequence is that of Methylenetetrahydrofolate--tRNA-(uracil-5-)-methyltransferase TrmFO from Trichormus variabilis (strain ATCC 29413 / PCC 7937) (Anabaena variabilis).